Consider the following 252-residue polypeptide: Adenosylcobinamide-GDP ribazoletransferase (252 aa).

Transmembrane regions (helical) follow at residues 4-24 (LFKGLMMSLSMFTIIPMPYVE), 38-58 (PIIGLIVGCVWFLGYKLINYL), 60-80 (ISIVLKSALIMIIPFIITGML), 113-133 (FSVISVIILFFIQFGAVHSFL), 141-161 (ILMFLPIISRNIVAYFFITII), 190-210 (LVCILFGSILGYIGIAILLIV), and 232-252 (VAGFSLVVGEIVGLFSACLFT).

It belongs to the CobS family. Mg(2+) serves as cofactor.

It is found in the cell membrane. The enzyme catalyses alpha-ribazole + adenosylcob(III)inamide-GDP = adenosylcob(III)alamin + GMP + H(+). It carries out the reaction alpha-ribazole 5'-phosphate + adenosylcob(III)inamide-GDP = adenosylcob(III)alamin 5'-phosphate + GMP + H(+). It participates in cofactor biosynthesis; adenosylcobalamin biosynthesis; adenosylcobalamin from cob(II)yrinate a,c-diamide: step 7/7. In terms of biological role, joins adenosylcobinamide-GDP and alpha-ribazole to generate adenosylcobalamin (Ado-cobalamin). Also synthesizes adenosylcobalamin 5'-phosphate from adenosylcobinamide-GDP and alpha-ribazole 5'-phosphate. The sequence is that of Adenosylcobinamide-GDP ribazoletransferase from Clostridium botulinum (strain Alaska E43 / Type E3).